A 100-amino-acid chain; its full sequence is Putative pterin-4-alpha-carbinolamine dehydratase (100 aa).

This sequence belongs to the pterin-4-alpha-carbinolamine dehydratase family.

The enzyme catalyses (4aS,6R)-4a-hydroxy-L-erythro-5,6,7,8-tetrahydrobiopterin = (6R)-L-erythro-6,7-dihydrobiopterin + H2O. The polypeptide is Putative pterin-4-alpha-carbinolamine dehydratase (Rhodopseudomonas palustris (strain TIE-1)).